The chain runs to 643 residues: Nicastrin (643 aa).

The first 20 residues, 1–20 (MRFKNVLVLLLLLVFSVINS), serve as a signal peptide directing secretion. Topologically, residues 21-611 (EPSAPATISD…VFKIGNSTTE (591 aa)) are extracellular. A disulfide bridge connects residues cysteine 42 and cysteine 54. N-linked (GlcNAc...) asparagine glycans are attached at residues asparagine 96 and asparagine 166. 2 cysteine pairs are disulfide-bonded: cysteine 204-cysteine 210 and cysteine 308-cysteine 318. 2 N-linked (GlcNAc...) asparagine glycosylation sites follow: asparagine 333 and asparagine 385. 3 cysteine pairs are disulfide-bonded: cysteine 479–cysteine 486, cysteine 540–cysteine 551, and cysteine 546–cysteine 556. A glycan (N-linked (GlcNAc...) asparagine) is linked at asparagine 584. The chain crosses the membrane as a helical span at residues 612–632 (IWFLVSGLIELLVSIGLILYV). Residues 633–643 (KKFLSNRYKLL) lie on the Cytoplasmic side of the membrane.

It belongs to the nicastrin family. As to quaternary structure, component of the gamma-secretase complex, a complex composed of a presenilin homodimer, nicastrin, aph1 and pen2.

The protein localises to the membrane. Its function is as follows. Essential subunit of the gamma-secretase complex, an endoprotease complex that catalyzes the intramembrane cleavage of integral membrane proteins such as Notch receptors and APP (amyloid-beta precursor protein). This Dictyostelium purpureum (Slime mold) protein is Nicastrin.